Reading from the N-terminus, the 963-residue chain is Glycine dehydrogenase (decarboxylating) (963 aa).

Lysine 710 carries the N6-(pyridoxal phosphate)lysine modification.

This sequence belongs to the GcvP family. The glycine cleavage system is composed of four proteins: P, T, L and H. It depends on pyridoxal 5'-phosphate as a cofactor.

The catalysed reaction is N(6)-[(R)-lipoyl]-L-lysyl-[glycine-cleavage complex H protein] + glycine + H(+) = N(6)-[(R)-S(8)-aminomethyldihydrolipoyl]-L-lysyl-[glycine-cleavage complex H protein] + CO2. Functionally, the glycine cleavage system catalyzes the degradation of glycine. The P protein binds the alpha-amino group of glycine through its pyridoxal phosphate cofactor; CO(2) is released and the remaining methylamine moiety is then transferred to the lipoamide cofactor of the H protein. The chain is Glycine dehydrogenase (decarboxylating) from Pseudoalteromonas translucida (strain TAC 125).